A 94-amino-acid polypeptide reads, in one-letter code: Large ribosomal subunit protein bL25 (94 aa).

It belongs to the bacterial ribosomal protein bL25 family. As to quaternary structure, part of the 50S ribosomal subunit; part of the 5S rRNA/L5/L18/L25 subcomplex. Contacts the 5S rRNA. Binds to the 5S rRNA independently of L5 and L18.

Functionally, this is one of the proteins that binds to the 5S RNA in the ribosome where it forms part of the central protuberance. This is Large ribosomal subunit protein bL25 from Salmonella agona (strain SL483).